The chain runs to 855 residues: Mitofusin FZO1 (855 aa).

Over residues 1–19 (MSEGKQQFKDSNKPHKDST) the composition is skewed to basic and acidic residues. The disordered stretch occupies residues 1–27 (MSEGKQQFKDSNKPHKDSTDQDDDAAT). At 1–705 (MSEGKQQFKD…PSLLFTSKIP (705 aa)) the chain is on the cytoplasmic side. Residues 91-190 (NYNNNRVLLK…KRVDDVSSKV (100 aa)) are HRN. One can recognise a Dynamin-type G domain in the interval 184 to 467 (DDVSSKVFIT…KKRSLSKLLP (284 aa)). GTP is bound by residues 197 to 202 (NTGKSA) and 370 to 373 (KKFD). Lys-398 participates in a covalent cross-link: Glycyl lysine isopeptide (Lys-Gly) (interchain with G-Cter in ubiquitin). Ser-408 is a binding site for GTP. A compositionally biased stretch (basic and acidic residues) spans 413–433 (ELPHYHNENDNEDHGDRKPDD). Positions 413–447 (ELPHYHNENDNEDHGDRKPDDDPYSSSDPDPDFDS) are disordered. Residue Lys-464 forms a Glycyl lysine isopeptide (Lys-Gly) (interchain with G-Cter in ubiquitin) linkage. The tract at residues 484–547 (KSNMKMYSEE…KEALLNALDV (64 aa)) is HR1. Residues 630-843 (GKRLKVSLSI…QSLYEGTVAQ (214 aa)) are required for interaction with UGO1. The helical transmembrane segment at 706-726 (TLTLYFLGSTKVVGNIILNGI) threads the bilayer. Residues 727–736 (KLSSWSSLKK) lie on the Mitochondrial intermembrane side of the membrane. Residues 737–757 (LSVPVIVVGSLLGLTYLIHDL) traverse the membrane as a helical segment. Residues 758–855 (PRALPMNLSI…MVEEINLDID (98 aa)) are Cytoplasmic-facing. The tract at residues 769 to 831 (YKRKLQELDY…KKESNLLSIK (63 aa)) is HR2. The stretch at 798-825 (TREILRSCEIIMDKKQITKKELENKKES) forms a coiled coil.

Belongs to the TRAFAC class dynamin-like GTPase superfamily. Dynamin/Fzo/YdjA family. Mitofusin subfamily. As to quaternary structure, homodimer. Dimerization depends on GTP binding. Component of a large multiprotein complex of 800 kDa. Binds the cytoplasmic domain of UGO1 which binds MGM1 through its intermembrane space domain. Interacts with MDM30. Interacts with UBP2 and UBP12. Interacts (when ubiquitinated) with DOA1; the interaction recruits FZO1 to CDC48 and promotes FZO1 proteasomal degradation. In terms of processing, ubiquitinated at Lys-398 and Lys-464. MDM30 and UGO1 are involved in ubiquitination. Deubiquitinated by UBP2 and UBP12. UBP2 and UBP12 recognize distinct ubiquitin chains on FZO1 that have opposing effects on mitochondrial fusion. UBP2 removes ubiquitin chains that initiate proteolysis of FZO1 and inhibit fusion. UBP12 recognizes ubiquitin chains that stabilize FZO1 and promote mitochondrial fusion. UBP12 deubiquitylates FZO1 only after oligomerization.

The protein localises to the mitochondrion outer membrane. The catalysed reaction is GTP + H2O = GDP + phosphate + H(+). Functionally, essential transmembrane GTPase, which mediates mitochondrial fusion. Fusion proceeds through several steps; first mitochondria are tethered together, then brought into close contact, followed by the formation of a docking ring around contact areas, and finally membrane fusion. Fusion of mitochondria occurs in many cell types and constitutes an important step in mitochondrial morphology, which is balanced between fusion and fission, mediated by FZO1 and DNM1, respectively. Functions antagonistically with DNM1. Probably acts by forming membrane contact sites that mediate mitochondrial membrane fusion. Mitochondrial docking and fusion requires GTP hydrolysis. Mitochondrial fusion also promotes increased lifespan. The polypeptide is Mitofusin FZO1 (FZO1) (Saccharomyces cerevisiae (strain ATCC 204508 / S288c) (Baker's yeast)).